The sequence spans 144 residues: Gas vesicle protein A1 (144 aa).

The segment at 72–144 is disordered; sequence EAGPRKDPGL…APSRRKEEQE (73 aa). The span at 113-127 shows a compositional bias: basic and acidic residues; sequence KQARDDGGSERETSS.

Belongs to the gas vesicle GvpA family. In terms of assembly, the gas vesicle shell is 2 nm thick and consists of a single layer of this protein. It forms helical ribs nearly perpendicular to the long axis of the vesicle.

The protein resides in the gas vesicle shell. Its function is as follows. Gas vesicles are hollow, gas filled proteinaceous nanostructures found in some microorganisms. During planktonic growth they allow positioning of the organism at a favorable depth for light or nutrient acquisition. GvpA forms the protein shell. It is not clear what function GVs perform in soil bacteria. In Streptomyces coelicolor (strain ATCC BAA-471 / A3(2) / M145), this protein is Gas vesicle protein A1.